The primary structure comprises 613 residues: WD40 repeat-containing protein HOS15 (613 aa).

The LisH domain maps to 5 to 37 (TSVELNFLVFRYLQESGFTHAAFTLGYEAGINK). Disordered stretches follow at residues 101–174 (KKRK…REKM) and 193–214 (EIEREREREKIEREKSHEKQLG). WD repeat units lie at residues 263-302 (GHTSEVCACAWSPSASLLASGSGDATARIWSIPEGSFKAV), 322-362 (EKSK…STLS), 363-402 (KHKGPIFSLKWNKKGDYLLTGSVDRTAVVWDVKAEEWKQQ), 405-443 (FHSGPTLDVDWRNNVSFATSSTDSMIYLCKIGETRPAKT), 446-485 (GHQGEVNCVKWDPTGSLLASCSDDSTAKIWNIKQSTFVHD), 488-536 (EHTK…MLCS), 539-580 (GHRE…KTYT), and 582-613 (NGGIFEVCWNKEGNKIAACFADNSVCVLDFRM).

Its subcellular location is the nucleus. Its function is as follows. Acts as a repressor of cold stress-regulated gene expression. Interacts specifically with and promotes deacetylation of histone H4. Plays a role in gene regulation for plant acclimation and tolerance to cold stress. This Arabidopsis thaliana (Mouse-ear cress) protein is WD40 repeat-containing protein HOS15.